The following is a 101-amino-acid chain: Small ribosomal subunit protein uS14 (101 aa).

Residues 1-20 (MAKTSQVNRNKRREKMAARD) form a disordered region.

This sequence belongs to the universal ribosomal protein uS14 family. As to quaternary structure, part of the 30S ribosomal subunit. Contacts proteins S3 and S10.

In terms of biological role, binds 16S rRNA, required for the assembly of 30S particles and may also be responsible for determining the conformation of the 16S rRNA at the A site. The chain is Small ribosomal subunit protein uS14 from Acidiphilium cryptum (strain JF-5).